The primary structure comprises 202 residues: Ras-related protein Rab-1A (202 aa).

Residues 15-23 (GDSGVGKSC), 33-40 (YSESFIST), 63-67 (DTAGQ), 121-124 (NKSD), and 151-153 (SAK) each bind GTP. Residues 37–45 (FISTIGVDF) carry the Effector region motif. Residues 180-202 (QTVDKNKVVPGSSAPISPKSGCC) are disordered. 2 S-geranylgeranyl cysteine lipidation sites follow: C201 and C202.

Belongs to the small GTPase superfamily. Rab family.

The protein resides in the cell membrane. This is Ras-related protein Rab-1A (rab1A) from Dictyostelium discoideum (Social amoeba).